The primary structure comprises 224 residues: MSVYKHAPSRVRLRQTRSTVVKGRSGSLSWRRVRTGDLGLAVWGGREEYRAVKPGTPGIQPKGDMMTVTVVDAGPGRVSRSVEVAAPAAELFAIVADPRRHRELDGSGTVRGNIKVPAKLVVGSKFSTKMKLFGLPYRITSRVTALKPNELVECSHPLGHRWRWEFESLSPTLTRVTETFDYHAAGAIKNGLKFYEMTGFAKSNAAGIEATLAKLSDQYARGRA.

This is an uncharacterized protein from Mycobacterium tuberculosis (strain CDC 1551 / Oshkosh).